The sequence spans 185 residues: ATP-dependent protease subunit HslV (185 aa).

Thr12 is a catalytic residue. Residues Ala168, Cys171, and Thr174 each coordinate Na(+).

It belongs to the peptidase T1B family. HslV subfamily. In terms of assembly, a double ring-shaped homohexamer of HslV is capped on each side by a ring-shaped HslU homohexamer. The assembly of the HslU/HslV complex is dependent on binding of ATP.

Its subcellular location is the cytoplasm. The catalysed reaction is ATP-dependent cleavage of peptide bonds with broad specificity.. With respect to regulation, allosterically activated by HslU binding. Its function is as follows. Protease subunit of a proteasome-like degradation complex believed to be a general protein degrading machinery. In Cereibacter sphaeroides (strain ATCC 17023 / DSM 158 / JCM 6121 / CCUG 31486 / LMG 2827 / NBRC 12203 / NCIMB 8253 / ATH 2.4.1.) (Rhodobacter sphaeroides), this protein is ATP-dependent protease subunit HslV.